Consider the following 502-residue polypeptide: Mannitol 2-dehydrogenase (502 aa).

NAD(+) is bound at residue 35–46 (IVHVGVGGFHRA).

It belongs to the mannitol dehydrogenase family. Monomer.

The catalysed reaction is D-mannitol + NAD(+) = D-fructose + NADH + H(+). In terms of biological role, catalyzes the NAD(H)-dependent interconversion of D-fructose and D-mannitol in the mannitol metabolic pathway. The chain is Mannitol 2-dehydrogenase from Pyricularia oryzae (strain 70-15 / ATCC MYA-4617 / FGSC 8958) (Rice blast fungus).